Reading from the N-terminus, the 307-residue chain is GTPase Era (307 aa).

The Era-type G domain maps to 14–184 (HSGFVAIVGK…REQILDILPE (171 aa)). The tract at residues 22–29 (GKPNVGKS) is G1. 22-29 (GKPNVGKS) serves as a coordination point for GTP. The G2 stretch occupies residues 48–52 (QTTRR). Residues 69 to 72 (DTPG) are G3. GTP is bound by residues 69–73 (DTPGL) and 131–134 (NKTD). The interval 131 to 134 (NKTD) is G4. Residues 162–164 (LSA) are G5. A KH type-2 domain is found at 215–292 (LREELPYAVA…FLGLEVIVIP (78 aa)).

Belongs to the TRAFAC class TrmE-Era-EngA-EngB-Septin-like GTPase superfamily. Era GTPase family. In terms of assembly, monomer.

The protein localises to the cytoplasm. Its subcellular location is the cell membrane. Functionally, an essential GTPase that binds both GDP and GTP, with rapid nucleotide exchange. Plays a role in 16S rRNA processing and 30S ribosomal subunit biogenesis and possibly also in cell cycle regulation and energy metabolism. The chain is GTPase Era from Deinococcus deserti (strain DSM 17065 / CIP 109153 / LMG 22923 / VCD115).